A 189-amino-acid chain; its full sequence is Crossover junction endodeoxyribonuclease RuvC (189 aa).

Residues Asp7, Glu68, and Asp141 contribute to the active site. Positions 7, 68, and 141 each coordinate Mg(2+).

The protein belongs to the RuvC family. In terms of assembly, homodimer which binds Holliday junction (HJ) DNA. The HJ becomes 2-fold symmetrical on binding to RuvC with unstacked arms; it has a different conformation from HJ DNA in complex with RuvA. In the full resolvosome a probable DNA-RuvA(4)-RuvB(12)-RuvC(2) complex forms which resolves the HJ. Mg(2+) serves as cofactor.

It localises to the cytoplasm. The enzyme catalyses Endonucleolytic cleavage at a junction such as a reciprocal single-stranded crossover between two homologous DNA duplexes (Holliday junction).. The RuvA-RuvB-RuvC complex processes Holliday junction (HJ) DNA during genetic recombination and DNA repair. Endonuclease that resolves HJ intermediates. Cleaves cruciform DNA by making single-stranded nicks across the HJ at symmetrical positions within the homologous arms, yielding a 5'-phosphate and a 3'-hydroxyl group; requires a central core of homology in the junction. The consensus cleavage sequence is 5'-(A/T)TT(C/G)-3'. Cleavage occurs on the 3'-side of the TT dinucleotide at the point of strand exchange. HJ branch migration catalyzed by RuvA-RuvB allows RuvC to scan DNA until it finds its consensus sequence, where it cleaves and resolves the cruciform DNA. This Rhodococcus jostii (strain RHA1) protein is Crossover junction endodeoxyribonuclease RuvC.